The primary structure comprises 660 residues: FAST kinase domain-containing protein 3, mitochondrial (660 aa).

The N-terminal 57 residues, 1–57 (MALVTLRRNLYHLSDFRIHGALAALKTQQVNHVHKTVKEHLCPWFWSQHPGPIRVRF), are a transit peptide targeting the mitochondrion. One can recognise an RAP domain in the interval 591-649 (VALCIDGPKRFCLNSKHLLGKEATKQRHLRLLGYQVVQIPYYEIEMLKSRLELVDYLQG).

Belongs to the FAST kinase family.

It is found in the mitochondrion. Its function is as follows. Required for normal mitochondrial respiration. Increases steady-state levels and half-lives of a subset of mature mitochondrial mRNAs MT-ND2, MT-ND3, MT-CYTB, MT-CO2, and MT-ATP8/6. Promotes MT-CO1 mRNA translation and increases mitochondrial complex IV assembly and activity. The protein is FAST kinase domain-containing protein 3, mitochondrial (FASTKD3) of Bos taurus (Bovine).